An 806-amino-acid polypeptide reads, in one-letter code: ATP-dependent zinc metalloprotease FTSH 11, chloroplastic/mitochondrial (806 aa).

The transit peptide at 1–63 (MSSSTLQASL…RFRPLPCSLR (63 aa)) directs the protein to the chloroplast and mitochondrion. Positions 106-116 (FVGGEETKSGG) are enriched in basic and acidic residues. A disordered region spans residues 106–130 (FVGGEETKSGGEEAEVSNGVTEGKE). Residues 301–321 (LVSTILFTVAVGLVWIMGAAA) traverse the membrane as a helical segment. An ATP-binding site is contributed by 402–409 (GAPGTGKT). His620 is a Zn(2+) binding site. Residue Glu621 is part of the active site. Zn(2+)-binding residues include His624 and Asp698.

This sequence in the N-terminal section; belongs to the AAA ATPase family. In the C-terminal section; belongs to the peptidase M41 family. In terms of assembly, homooligomer. Zn(2+) is required as a cofactor.

It localises to the mitochondrion inner membrane. Its subcellular location is the plastid. The protein localises to the chloroplast thylakoid membrane. Its function is as follows. Probable ATP-dependent zinc metallopeptidase. Involved in the assembly and/or stability of the complexes I and V. Involved in thermotolerance but not in high light stress resistance or in the assembly/stability of the complexes I and V of the mitochondrial oxidative phosphorylation system. In Arabidopsis thaliana (Mouse-ear cress), this protein is ATP-dependent zinc metalloprotease FTSH 11, chloroplastic/mitochondrial (FTSH11).